A 227-amino-acid polypeptide reads, in one-letter code: 7-cyano-7-deazaguanine synthase (227 aa).

Position 8-18 (L8–L18) interacts with ATP. Zn(2+) contacts are provided by C191, C201, C204, and C207.

Belongs to the QueC family. Zn(2+) serves as cofactor.

The catalysed reaction is 7-carboxy-7-deazaguanine + NH4(+) + ATP = 7-cyano-7-deazaguanine + ADP + phosphate + H2O + H(+). It participates in purine metabolism; 7-cyano-7-deazaguanine biosynthesis. Functionally, catalyzes the ATP-dependent conversion of 7-carboxy-7-deazaguanine (CDG) to 7-cyano-7-deazaguanine (preQ(0)). In Paramagnetospirillum magneticum (strain ATCC 700264 / AMB-1) (Magnetospirillum magneticum), this protein is 7-cyano-7-deazaguanine synthase.